A 622-amino-acid chain; its full sequence is Palmitoyltransferase pfa3 (622 aa).

Topologically, residues 1 to 38 (MDATPYTTSSTSTALDSPSSLSATMARRWARKLERYCC) are cytoplasmic. The chain crosses the membrane as a helical span at residues 39 to 59 (TCVTYFPLAFVYSMTSWAAYV). At 60-76 (DVSLSTTPSRVTWLGHS) the chain is on the vacuolar side. Residues 77 to 97 (YGFIAVVLYLLANWCYTYAVF) traverse the membrane as a helical segment. Over 98-175 (TSPGSTTNEY…ATCVGLRNHK (78 aa)) the chain is Cytoplasmic. A DHHC domain is found at 132–182 (RFCKKCQARKPDRAHHCSTCRRCVLKMDHHCPWLATCVGLRNHKAFLLFLI). Residues 176–196 (AFLLFLIYTSVFCWVSFAGSA) traverse the membrane as a helical segment. The Vacuolar portion of the chain corresponds to 197 to 217 (SWVWEEIMSNTTYVETLMPVN). The helical transmembrane segment at 218 to 238 (YIMLSVISGIIGIVLSAFCGW) threads the bilayer. Over 239–622 (HIYLASRGQT…EGRSNDDGVD (384 aa)) the chain is Cytoplasmic. 3 disordered regions span residues 298 to 334 (PGVT…ELQA), 419 to 507 (REEQ…YADD), and 533 to 622 (DDVL…DGVD). The segment covering 302-311 (RPEEGEEMRR) has biased composition (basic and acidic residues). The span at 313–330 (TTPSGSSQRNDLASQHNP) shows a compositional bias: polar residues. A compositionally biased stretch (basic and acidic residues) spans 419–428 (REEQRQRERQ). Over residues 443–455 (YTPTWTPPNQQHP) the composition is skewed to polar residues. The span at 466–488 (PSSQPQTQRNSNSSSPSFTPSRR) shows a compositional bias: low complexity. Positions 533–547 (DDVLNDDDDDDEDYF) are enriched in acidic residues. The segment covering 610-622 (NGEEGRSNDDGVD) has biased composition (basic and acidic residues).

Belongs to the DHHC palmitoyltransferase family. PFA3 subfamily. Autopalmitoylated.

It is found in the vacuole membrane. It carries out the reaction L-cysteinyl-[protein] + hexadecanoyl-CoA = S-hexadecanoyl-L-cysteinyl-[protein] + CoA. Its function is as follows. Palmitoyltransferase specific for vac8. Palmitoylates vac8 at one or more of its N-terminal cysteine residues, which is required for its proper membrane localization. In Neurospora crassa (strain ATCC 24698 / 74-OR23-1A / CBS 708.71 / DSM 1257 / FGSC 987), this protein is Palmitoyltransferase pfa3 (ptr-3).